Reading from the N-terminus, the 534-residue chain is Cytochrome c oxidase subunit 1 (534 aa).

The chain crosses the membrane as a helical span at residues 16-36 (VLYFIFAIFCGMAGTAMSLII). Ca(2+)-binding residues include Glu-39, Ala-42, and Gly-44. Transmembrane regions (helical) follow at residues 57–77 (VLVV…ALIG), 101–121 (ISFW…LVES), 147–167 (AIFA…NFIV), 182–202 (LPLF…SLPV), 235–255 (LFWF…FGII), and 267–287 (VFGE…GFLV). His-62 contacts Fe(II)-heme a. Residue His-241 participates in Cu cation binding. Residues 241–245 (HPEVY) constitute a cross-link (1'-histidyl-3'-tyrosine (His-Tyr)). Position 245 (Tyr-245) interacts with O2. Residues His-290 and His-291 each coordinate Cu cation. 2 helical membrane passes run 310-330 (MIIA…IYGG) and 338-358 (MLYA…GVAL). Positions 368 and 369 each coordinate Mg(2+). The next 2 helical transmembrane spans lie at 372–392 (YVVG…LFAG) and 412–432 (IQFW…HFLG). Position 376 (His-376) interacts with heme a3. Residue His-378 participates in Fe(II)-heme a binding. Position 441 (Pro-441) interacts with Ca(2+). Residues 452 to 472 (YVASIGSIIAVFSLFLFIYIL) traverse the membrane as a helical segment.

It belongs to the heme-copper respiratory oxidase family. As to quaternary structure, component of the cytochrome c oxidase (complex IV, CIV), a multisubunit enzyme composed of a catalytic core of 3 subunits and several supernumerary subunits. The complex exists as a monomer or a dimer and forms supercomplexes (SCs) in the inner mitochondrial membrane with ubiquinol-cytochrome c oxidoreductase (cytochrome b-c1 complex, complex III, CIII). The cofactor is heme. Cu cation serves as cofactor.

The protein resides in the mitochondrion inner membrane. It carries out the reaction 4 Fe(II)-[cytochrome c] + O2 + 8 H(+)(in) = 4 Fe(III)-[cytochrome c] + 2 H2O + 4 H(+)(out). Its pathway is energy metabolism; oxidative phosphorylation. Component of the cytochrome c oxidase, the last enzyme in the mitochondrial electron transport chain which drives oxidative phosphorylation. The respiratory chain contains 3 multisubunit complexes succinate dehydrogenase (complex II, CII), ubiquinol-cytochrome c oxidoreductase (cytochrome b-c1 complex, complex III, CIII) and cytochrome c oxidase (complex IV, CIV), that cooperate to transfer electrons derived from NADH and succinate to molecular oxygen, creating an electrochemical gradient over the inner membrane that drives transmembrane transport and the ATP synthase. Cytochrome c oxidase is the component of the respiratory chain that catalyzes the reduction of oxygen to water. Electrons originating from reduced cytochrome c in the intermembrane space (IMS) are transferred via the dinuclear copper A center (CU(A)) of subunit 2 and heme A of subunit 1 to the active site in subunit 1, a binuclear center (BNC) formed by heme A3 and copper B (CU(B)). The BNC reduces molecular oxygen to 2 water molecules using 4 electrons from cytochrome c in the IMS and 4 protons from the mitochondrial matrix. This chain is Cytochrome c oxidase subunit 1 (COX1), found in Kluyveromyces lactis (strain ATCC 8585 / CBS 2359 / DSM 70799 / NBRC 1267 / NRRL Y-1140 / WM37) (Yeast).